The following is a 194-amino-acid chain: dTTP/UTP pyrophosphatase (194 aa).

D66 acts as the Proton acceptor in catalysis.

Belongs to the Maf family. YhdE subfamily. A divalent metal cation is required as a cofactor.

Its subcellular location is the cytoplasm. It catalyses the reaction dTTP + H2O = dTMP + diphosphate + H(+). The catalysed reaction is UTP + H2O = UMP + diphosphate + H(+). Its function is as follows. Nucleoside triphosphate pyrophosphatase that hydrolyzes dTTP and UTP. May have a dual role in cell division arrest and in preventing the incorporation of modified nucleotides into cellular nucleic acids. This Anaeromyxobacter dehalogenans (strain 2CP-C) protein is dTTP/UTP pyrophosphatase.